A 406-amino-acid chain; its full sequence is Protein phosphatase 2C (406 aa).

One can recognise a PPM-type phosphatase domain in the interval 23 to 274 (RCGSNCVNGY…DNISCMIVQF (252 aa)). Asp-55, Gly-56, Asp-221, and Asp-265 together coordinate Mn(2+).

Belongs to the PP2C family. As to quaternary structure, monomer. Mg(2+) serves as cofactor. Mn(2+) is required as a cofactor.

The catalysed reaction is O-phospho-L-seryl-[protein] + H2O = L-seryl-[protein] + phosphate. The enzyme catalyses O-phospho-L-threonyl-[protein] + H2O = L-threonyl-[protein] + phosphate. In terms of biological role, enzyme with a broad specificity. This Leishmania chagasi protein is Protein phosphatase 2C.